Reading from the N-terminus, the 212-residue chain is Thymidylate kinase (212 aa).

At A2 the chain carries N-acetylalanine. ATP contacts are provided by residues 16 to 21 (RAGKST) and R97. The LID stretch occupies residues 133 to 157 (LQLQLADAAKRGAFGHERYENGAFQ). The residue at position 169 (K169) is an N6-acetyllysine. ATP is bound by residues K182 and R192.

The protein belongs to the thymidylate kinase family. In terms of assembly, homodimer. Mg(2+) is required as a cofactor.

It carries out the reaction dTMP + ATP = dTDP + ADP. It functions in the pathway pyrimidine metabolism; dTTP biosynthesis. Functionally, catalyzes the phosphorylation of thymidine monophosphate (dTMP) to thymidine diphosphate (dTDP), the immediate precursor for the DNA building block dTTP, with ATP as the preferred phosphoryl donor in the presence of Mg(2+). This chain is Thymidylate kinase (DTYMK), found in Homo sapiens (Human).